We begin with the raw amino-acid sequence, 1295 residues long: Phosphoribosylformylglycinamidine synthase (1295 aa).

Residues 305-327 (WPGAATGSGGEIRDEGATGRGAK) form a disordered region. ATP contacts are provided by residues 307–318 (GAATGSGGEIRD), 386–388 (TGY), and Ala-678. Residues Asp-679, Glu-718, Asn-722, and Asp-884 each coordinate Mg(2+). ATP is bound at residue Ser-886. Residues 1042-1295 (VAVLREQGVN…IFRNARKQLG (254 aa)) enclose the Glutamine amidotransferase type-1 domain. Cys-1135 functions as the Nucleophile in the catalytic mechanism. Active-site residues include His-1260 and Glu-1262.

The protein in the N-terminal section; belongs to the FGAMS family. In terms of assembly, monomer.

The protein resides in the cytoplasm. It catalyses the reaction N(2)-formyl-N(1)-(5-phospho-beta-D-ribosyl)glycinamide + L-glutamine + ATP + H2O = 2-formamido-N(1)-(5-O-phospho-beta-D-ribosyl)acetamidine + L-glutamate + ADP + phosphate + H(+). It participates in purine metabolism; IMP biosynthesis via de novo pathway; 5-amino-1-(5-phospho-D-ribosyl)imidazole from N(2)-formyl-N(1)-(5-phospho-D-ribosyl)glycinamide: step 1/2. Its function is as follows. Phosphoribosylformylglycinamidine synthase involved in the purines biosynthetic pathway. Catalyzes the ATP-dependent conversion of formylglycinamide ribonucleotide (FGAR) and glutamine to yield formylglycinamidine ribonucleotide (FGAM) and glutamate. The protein is Phosphoribosylformylglycinamidine synthase of Salmonella paratyphi A (strain ATCC 9150 / SARB42).